A 182-amino-acid chain; its full sequence is Large ribosomal subunit protein uL5 (182 aa).

This sequence belongs to the universal ribosomal protein uL5 family. Part of the 50S ribosomal subunit; part of the 5S rRNA/L5/L18/L25 subcomplex. Contacts the 5S rRNA and the P site tRNA. Forms a bridge to the 30S subunit in the 70S ribosome.

Functionally, this is one of the proteins that bind and probably mediate the attachment of the 5S RNA into the large ribosomal subunit, where it forms part of the central protuberance. In the 70S ribosome it contacts protein S13 of the 30S subunit (bridge B1b), connecting the 2 subunits; this bridge is implicated in subunit movement. Contacts the P site tRNA; the 5S rRNA and some of its associated proteins might help stabilize positioning of ribosome-bound tRNAs. This chain is Large ribosomal subunit protein uL5, found in Thermosipho melanesiensis (strain DSM 12029 / CIP 104789 / BI429).